The chain runs to 108 residues: uncharacterized protein (108 aa).

3 cysteine pairs are disulfide-bonded: cysteine 44–cysteine 82, cysteine 60–cysteine 78, and cysteine 63–cysteine 91.

The protein belongs to the arthropod CHH/MIH/GIH/VIH hormone family.

This is an uncharacterized protein from Caenorhabditis elegans.